We begin with the raw amino-acid sequence, 216 residues long: MKINTVLFDLDGTLINTNELIISSFLHTLHTYYPNQYKREDVLPFIGPSLHDTFSKIDESKVEELITSYRQFNHDHHDELVEEYETVYETVQELKKQGYKVGIVTTKARQTVEMGLKLSKLDEFFDVVVTIDDVEHVKPHPEPLQKALQLLDAKPEEALMVGDNHHDIVGGQNAGTKTAAVSWTLKGRAYLETYKPDFMLDKMSDLLPILSDMNRS.

Catalysis depends on Asp-9, which acts as the Nucleophile.

The protein belongs to the HAD-like hydrolase superfamily. PpaX family. Mg(2+) serves as cofactor.

It carries out the reaction diphosphate + H2O = 2 phosphate + H(+). Its function is as follows. Hydrolyzes pyrophosphate formed during P-Ser-HPr dephosphorylation by HPrK/P. Might play a role in controlling the intracellular pyrophosphate pool. The sequence is that of Pyrophosphatase PpaX from Bacillus anthracis (strain CDC 684 / NRRL 3495).